Here is a 97-residue protein sequence, read N- to C-terminus: Serine protease inhibitor Kazal-type 14 (97 aa).

An N-terminal signal peptide occupies residues 1 to 21 (MAKSFPVFSLLSFILIHLVLS). The region spanning 34 to 97 (GIIKVKCPYE…RIRFYHDGKC (64 aa)) is the Kazal-like domain. Disulfide bonds link C40-C79, C57-C76, and C65-C97. The N-linked (GlcNAc...) asparagine glycan is linked to N51.

The protein localises to the secreted. Its function is as follows. May be a serine protease inhibitor. In Homo sapiens (Human), this protein is Serine protease inhibitor Kazal-type 14 (SPINK14).